The chain runs to 373 residues: Dual-specificity RNA methyltransferase RlmN (373 aa).

Glu-104 (proton acceptor) is an active-site residue. Positions 110 to 349 constitute a Radical SAM core domain; that stretch reads KNQRTTLCIS…VTIRKIRGYD (240 aa). An intrachain disulfide couples Cys-117 to Cys-354. Residues Cys-124, Cys-128, and Cys-131 each coordinate [4Fe-4S] cluster. Residues 178–179, Ser-210, 232–234, and Asn-311 each bind S-adenosyl-L-methionine; these read GE and SLH. Residue Cys-354 is the S-methylcysteine intermediate of the active site.

Belongs to the radical SAM superfamily. RlmN family. Requires [4Fe-4S] cluster as cofactor.

It localises to the cytoplasm. It catalyses the reaction adenosine(2503) in 23S rRNA + 2 reduced [2Fe-2S]-[ferredoxin] + 2 S-adenosyl-L-methionine = 2-methyladenosine(2503) in 23S rRNA + 5'-deoxyadenosine + L-methionine + 2 oxidized [2Fe-2S]-[ferredoxin] + S-adenosyl-L-homocysteine. It carries out the reaction adenosine(37) in tRNA + 2 reduced [2Fe-2S]-[ferredoxin] + 2 S-adenosyl-L-methionine = 2-methyladenosine(37) in tRNA + 5'-deoxyadenosine + L-methionine + 2 oxidized [2Fe-2S]-[ferredoxin] + S-adenosyl-L-homocysteine. In terms of biological role, specifically methylates position 2 of adenine 2503 in 23S rRNA and position 2 of adenine 37 in tRNAs. m2A2503 modification seems to play a crucial role in the proofreading step occurring at the peptidyl transferase center and thus would serve to optimize ribosomal fidelity. The sequence is that of Dual-specificity RNA methyltransferase RlmN from Buchnera aphidicola subsp. Baizongia pistaciae (strain Bp).